A 223-amino-acid polypeptide reads, in one-letter code: MCWAVGRRWAWAALLLAVAAVLAQVVWLWLGTQSFVFQHEEIAQLARQYAGLDHELAFSRLIVELRRLHPGHVLPDEDLQWVFVNAGGWMGAMCLLHASLSEYVLLFGTALGSSGHSGRYWAEISDTIISGTFHQWREGTTKSEVFYPGETVVHGPGEATAVEWGPNTWMVEYGRGVIPSTLGFALADTVFSTQDFLTLFYTLRAYARGLRLELTTYLFGQDA.

The Lumenal portion of the chain corresponds to 1-9 (MCWAVGRRW). Residues 2–8 (CWAVGRR) form a targeting to endoplasmic reticulum-associated lipid droplets region. Residues 10-30 (AWAALLLAVAAVLAQVVWLWL) form a helical membrane-spanning segment. The Cytoplasmic portion of the chain corresponds to 31-223 (GTQSFVFQHE…LTTYLFGQDA (193 aa)). The important for ligand-binding stretch occupies residues 99 to 106 (SLSEYVLL). A C-terminal hydrophobic region region spans residues 177 to 223 (VIPSTLGFALADTVFSTQDFLTLFYTLRAYARGLRLELTTYLFGQDA).

This sequence belongs to the ERG2 family. Homotrimer. Forms a ternary complex with ANK2 and ITPR3. The complex is disrupted by agonists. Interacts with KCNA4. Interacts with KCNA2; cocaine consumption leads to increased interaction. Interacts with RNF112 in an oxidative stress-regulated manner.

It is found in the nucleus inner membrane. It localises to the nucleus outer membrane. The protein localises to the nucleus envelope. The protein resides in the cytoplasmic vesicle. Its subcellular location is the endoplasmic reticulum membrane. It is found in the membrane. It localises to the lipid droplet. The protein localises to the cell junction. The protein resides in the cell membrane. Its subcellular location is the cell projection. It is found in the growth cone. It localises to the postsynaptic density membrane. In terms of biological role, functions in lipid transport from the endoplasmic reticulum and is involved in a wide array of cellular functions probably through regulation of the biogenesis of lipid microdomains at the plasma membrane. Involved in the regulation of different receptors it plays a role in BDNF signaling and EGF signaling. Also regulates ion channels like the potassium channel and could modulate neurotransmitter release. Plays a role in calcium signaling through modulation together with ANK2 of the ITP3R-dependent calcium efflux at the endoplasmic reticulum. Plays a role in several other cell functions including proliferation, survival and death. Originally identified for its ability to bind various psychoactive drugs it is involved in learning processes, memory and mood alteration. Necessary for proper mitochondrial axonal transport in motor neurons, in particular the retrograde movement of mitochondria. Plays a role in protecting cells against oxidative stress-induced cell death via its interaction with RNF112. The protein is Sigma non-opioid intracellular receptor 1 (SIGMAR1) of Bos taurus (Bovine).